The sequence spans 516 residues: uncharacterized protein (516 aa).

Helical transmembrane passes span 10 to 27 (IRYP…GYWI), 32 to 54 (IGAF…GDFA), 64 to 83 (SFLF…PQFV), 95 to 117 (LLAV…ILGL), and 165 to 187 (AVCY…PALL). RCK C-terminal domains are found at residues 208–291 (KPGL…SRAE) and 296–376 (RELL…NIGV). The next 4 membrane-spanning stretches (helical) occupy residues 386-408 (FVVL…FPVG), 412-430 (IALS…VGHL), 443-465 (GAIS…IHAG), and 480-502 (LLGG…HFVL).

This sequence belongs to the AAE transporter (TC 2.A.81) family.

The protein localises to the cell membrane. This is an uncharacterized protein from Bradyrhizobium diazoefficiens (strain JCM 10833 / BCRC 13528 / IAM 13628 / NBRC 14792 / USDA 110).